The chain runs to 226 residues: ATP synthase F(0) complex subunit a (226 aa).

6 consecutive transmembrane segments (helical) span residues 12–32 (PTMM…ILFP), 68–88 (WTLM…LGLL), 97–117 (QLSM…FMGF), 135–155 (IFLI…QPMA), 164–184 (ITAG…LMDI), and 189–209 (ALIT…VAMI).

This sequence belongs to the ATPase A chain family. As to quaternary structure, component of the ATP synthase complex composed at least of ATP5F1A/subunit alpha, ATP5F1B/subunit beta, ATP5MC1/subunit c (homooctomer), MT-ATP6/subunit a, MT-ATP8/subunit 8, ATP5ME/subunit e, ATP5MF/subunit f, ATP5MG/subunit g, ATP5MK/subunit k, ATP5MJ/subunit j, ATP5F1C/subunit gamma, ATP5F1D/subunit delta, ATP5F1E/subunit epsilon, ATP5PF/subunit F6, ATP5PB/subunit b, ATP5PD/subunit d, ATP5PO/subunit OSCP. ATP synthase complex consists of a soluble F(1) head domain (subunits alpha(3) and beta(3)) - the catalytic core - and a membrane F(0) domain - the membrane proton channel (subunits c, a, 8, e, f, g, k and j). These two domains are linked by a central stalk (subunits gamma, delta, and epsilon) rotating inside the F1 region and a stationary peripheral stalk (subunits F6, b, d, and OSCP). Interacts with DNAJC30; interaction is direct.

The protein resides in the mitochondrion inner membrane. It carries out the reaction H(+)(in) = H(+)(out). Its function is as follows. Subunit a, of the mitochondrial membrane ATP synthase complex (F(1)F(0) ATP synthase or Complex V) that produces ATP from ADP in the presence of a proton gradient across the membrane which is generated by electron transport complexes of the respiratory chain. ATP synthase complex consist of a soluble F(1) head domain - the catalytic core - and a membrane F(1) domain - the membrane proton channel. These two domains are linked by a central stalk rotating inside the F(1) region and a stationary peripheral stalk. During catalysis, ATP synthesis in the catalytic domain of F(1) is coupled via a rotary mechanism of the central stalk subunits to proton translocation. With the subunit c (ATP5MC1), forms the proton-conducting channel in the F(0) domain, that contains two crucial half-channels (inlet and outlet) that facilitate proton movement from the mitochondrial intermembrane space (IMS) into the matrix. Protons are taken up via the inlet half-channel and released through the outlet half-channel, following a Grotthuss mechanism. The chain is ATP synthase F(0) complex subunit a from Equus asinus (Donkey).